The following is a 185-amino-acid chain: Orotate phosphoribosyltransferase (185 aa).

Residues arginine 98, lysine 99, lysine 102, histidine 104, and glutamate 128–serine 136 each bind 5-phospho-alpha-D-ribose 1-diphosphate. Threonine 132 and arginine 160 together coordinate orotate.

It belongs to the purine/pyrimidine phosphoribosyltransferase family. PyrE subfamily. Homodimer. Mg(2+) is required as a cofactor.

It catalyses the reaction orotidine 5'-phosphate + diphosphate = orotate + 5-phospho-alpha-D-ribose 1-diphosphate. Its pathway is pyrimidine metabolism; UMP biosynthesis via de novo pathway; UMP from orotate: step 1/2. Its function is as follows. Catalyzes the transfer of a ribosyl phosphate group from 5-phosphoribose 1-diphosphate to orotate, leading to the formation of orotidine monophosphate (OMP). The polypeptide is Orotate phosphoribosyltransferase (Bradyrhizobium sp. (strain ORS 278)).